Consider the following 122-residue polypeptide: Small ribosomal subunit protein uS13 (122 aa).

Residues 93-122 (RRGLPVRGQRTKTNARTRKGPKKTIAGKKK) form a disordered region.

It belongs to the universal ribosomal protein uS13 family. In terms of assembly, part of the 30S ribosomal subunit. Forms a loose heterodimer with protein S19. Forms two bridges to the 50S subunit in the 70S ribosome.

Its function is as follows. Located at the top of the head of the 30S subunit, it contacts several helices of the 16S rRNA. In the 70S ribosome it contacts the 23S rRNA (bridge B1a) and protein L5 of the 50S subunit (bridge B1b), connecting the 2 subunits; these bridges are implicated in subunit movement. Contacts the tRNAs in the A and P-sites. The chain is Small ribosomal subunit protein uS13 from Corynebacterium efficiens (strain DSM 44549 / YS-314 / AJ 12310 / JCM 11189 / NBRC 100395).